A 122-amino-acid chain; its full sequence is Small ribosomal subunit protein uS13c (122 aa).

Residues 102–122 (RTRTNARTRRGAKKTVAGKKK) are disordered.

The protein belongs to the universal ribosomal protein uS13 family. As to quaternary structure, part of the 30S ribosomal subunit.

It is found in the plastid. Its subcellular location is the chloroplast. Its function is as follows. Located at the top of the head of the 30S subunit, it contacts several helices of the 16S rRNA. This Guillardia theta (Cryptophyte) protein is Small ribosomal subunit protein uS13c.